The primary structure comprises 3131 residues: Enniatin synthase (3131 aa).

Residues 53 to 466 are condensation 1; it reads ADDKQRAVGH…VEKVDMMTQE (414 aa). The segment at 186–212 is disordered; it reads NDEHPRQFETPDSSQATPEEDLQPNPS. Positions 495–887 are adenylation 1; the sequence is SQSPNKAAVA…GRMDSQVKIR (393 aa). The Carrier 1 domain maps to 1010-1086; sequence SSGTDTYTKL…GLKAIVIGTS (77 aa). Ser1047 carries the post-translational modification O-(pantetheine 4'-phosphoryl)serine. Residues 1105-1534 are condensation 2; sequence SYAQNRMWFL…ETCISVLPLT (430 aa). Residues 1563-1960 are adenylation 2; sequence FREQAAANPE…GRMDNQFKIR (398 aa). Residues 2021–2177 form an S-adenosyl-L-methionine-dependent N-methyltransferase region; that stretch reads EGWQDHFESG…YLAEVIDGLI (157 aa). Carrier domains lie at 2504–2578 and 2598–2671; these read FPIS…RQGL and APRT…ESSH. Residues Ser2538 and Ser2632 each carry the O-(pantetheine 4'-phosphoryl)serine modification. The condensation 3 stretch occupies residues 2718 to 3123; the sequence is QDVYPSTQMQ…RHVLEEVCKT (406 aa).

This sequence belongs to the ATP-dependent AMP-binding enzyme family. The cofactor is pantetheine 4'-phosphate. The N-terminus is blocked.

Its pathway is antibiotic biosynthesis; enniatin biosynthesis. The N-methylation activity is inhibited by S-adenosyl-L-homocysteine and sinefugin. Nonribosomal peptide synthetase that synthesizes enniatin by coupling three D-hydroxycarboxylic acids and three L-amino acids via amide and ester bonds in an alternating fashion. Whereas ESYN1 can accept different amino acids as precursors (L -valine, L-isoleucine or L-leucine), only one species of D-hydroxycarboxylic acid can be found in natural enniatin isolates (D-hydroxyisovaleric acid, D-Hiv). D-Hiv stems from L-valine deanimation by a valine aminotransferase to 2-keto-isovaleric acid (2-Kiv), which becomes subsequently reduced by a keto-isovaleric acid reductase (KivR) to D-Hiv. Peptide bond formation and N-methylation of the amino acid occur before three enzyme-bound dipeptidols are condensed to a hexapeptidol. In Fusarium equiseti (Fusarium scirpi), this protein is Enniatin synthase.